The sequence spans 688 residues: Protein sel-1 homolog 2 (688 aa).

The first 23 residues, Met1–Ala23, serve as a signal peptide directing secretion. Topologically, residues Glu24–Thr662 are extracellular. Residue Asn34 is glycosylated (N-linked (GlcNAc...) asparagine). 11 Sel1-like repeats span residues Gly107 to Asn142, Leu143 to Ser178, Cys179 to Asn214, Met215 to Ala250, Val297 to Ser333, Ala334 to Asn370, Ala371 to Trp406, Pro407 to Gln442, Pro443 to His478, Ala551 to His586, and Ala588 to Pro623. The chain crosses the membrane as a helical span at residues Ile663–Leu683. The Cytoplasmic portion of the chain corresponds to Arg684–Gly688.

It belongs to the sel-1 family.

Its subcellular location is the membrane. The protein localises to the cell projection. It is found in the cilium. The protein resides in the nucleus speckle. The protein is Protein sel-1 homolog 2 (SEL1L2) of Homo sapiens (Human).